The chain runs to 296 residues: Glycine--tRNA ligase alpha subunit (296 aa).

Belongs to the class-II aminoacyl-tRNA synthetase family. As to quaternary structure, tetramer of two alpha and two beta subunits.

The protein resides in the cytoplasm. The catalysed reaction is tRNA(Gly) + glycine + ATP = glycyl-tRNA(Gly) + AMP + diphosphate. This Maricaulis maris (strain MCS10) (Caulobacter maris) protein is Glycine--tRNA ligase alpha subunit.